The primary structure comprises 399 residues: Elongation factor Tu (399 aa).

Residues Lys-10–Val-209 enclose the tr-type G domain. The G1 stretch occupies residues Gly-19–Thr-26. Gly-19–Thr-26 provides a ligand contact to GTP. Thr-26 serves as a coordination point for Mg(2+). The interval Gly-62–Asn-66 is G2. Residues Asp-83 to Gly-86 are G3. Residues Asp-83–His-87 and Asn-138–Asp-141 contribute to the GTP site. The interval Asn-138–Asp-141 is G4. Residues Ser-175–Tyr-177 form a G5 region.

It belongs to the TRAFAC class translation factor GTPase superfamily. Classic translation factor GTPase family. EF-Tu/EF-1A subfamily. As to quaternary structure, monomer.

The protein localises to the cytoplasm. The catalysed reaction is GTP + H2O = GDP + phosphate + H(+). Functionally, GTP hydrolase that promotes the GTP-dependent binding of aminoacyl-tRNA to the A-site of ribosomes during protein biosynthesis. This is Elongation factor Tu from Bifidobacterium longum (strain DJO10A).